A 94-amino-acid chain; its full sequence is Aspartyl/glutamyl-tRNA(Asn/Gln) amidotransferase subunit C (94 aa).

Belongs to the GatC family. Heterotrimer of A, B and C subunits.

It carries out the reaction L-glutamyl-tRNA(Gln) + L-glutamine + ATP + H2O = L-glutaminyl-tRNA(Gln) + L-glutamate + ADP + phosphate + H(+). The catalysed reaction is L-aspartyl-tRNA(Asn) + L-glutamine + ATP + H2O = L-asparaginyl-tRNA(Asn) + L-glutamate + ADP + phosphate + 2 H(+). Functionally, allows the formation of correctly charged Asn-tRNA(Asn) or Gln-tRNA(Gln) through the transamidation of misacylated Asp-tRNA(Asn) or Glu-tRNA(Gln) in organisms which lack either or both of asparaginyl-tRNA or glutaminyl-tRNA synthetases. The reaction takes place in the presence of glutamine and ATP through an activated phospho-Asp-tRNA(Asn) or phospho-Glu-tRNA(Gln). This chain is Aspartyl/glutamyl-tRNA(Asn/Gln) amidotransferase subunit C, found in Carboxydothermus hydrogenoformans (strain ATCC BAA-161 / DSM 6008 / Z-2901).